Reading from the N-terminus, the 325-residue chain is D-alanine--D-alanine ligase (325 aa).

The region spanning 121–316 (KYVFEGCGLP…FEELVVRILR (196 aa)) is the ATP-grasp domain. ATP is bound at residue 147–202 (VAALGTPLSVKPAHEGSSIGIRKVNSAAELAEAYEAAARLDDLVLVEQWIEGPEFT). Mg(2+) contacts are provided by Asp-270, Glu-283, and Asn-285.

Belongs to the D-alanine--D-alanine ligase family. Mg(2+) is required as a cofactor. The cofactor is Mn(2+).

The protein resides in the cytoplasm. It catalyses the reaction 2 D-alanine + ATP = D-alanyl-D-alanine + ADP + phosphate + H(+). The protein operates within cell wall biogenesis; peptidoglycan biosynthesis. Its function is as follows. Cell wall formation. The protein is D-alanine--D-alanine ligase of Marinobacter nauticus (strain ATCC 700491 / DSM 11845 / VT8) (Marinobacter aquaeolei).